Reading from the N-terminus, the 300-residue chain is 11-beta-hydroxysteroid dehydrogenase 1 (300 aa).

The Cytoplasmic segment spans residues 1–7; it reads MAFLKKY. A helical; Signal-anchor for type II membrane protein membrane pass occupies residues 8–24; the sequence is LLTILMVFLAYYYYSAN. Over 25–300 the chain is Lumenal; the sequence is EKFRPEMLQG…SNEKLYGRWA (276 aa). Residues 41-67, 92-93, and 119-123 each bind NADP(+); these read GASK…TARS, SM, and NHVLY. S170 serves as a coordination point for substrate. The active-site Proton acceptor is Y183. 183-187 contacts NADP(+); sequence YSASK. N207 carries an N-linked (GlcNAc...) asparagine glycan. 218–222 is a binding site for NADP(+); that stretch reads IDTET.

This sequence belongs to the short-chain dehydrogenases/reductases (SDR) family. As to quaternary structure, homodimer. As to expression, widely expressed in all peripheral tissues, with highest expression in liver, followed by kidney and lung, and very low expression in heart, lung, spleen, stomach, small intestine, colon, skin, skeletal muscle, and ovary.

The protein resides in the endoplasmic reticulum membrane. It carries out the reaction an 11beta-hydroxysteroid + NADP(+) = an 11-oxosteroid + NADPH + H(+). It catalyses the reaction cortisone + NADPH + H(+) = cortisol + NADP(+). The catalysed reaction is corticosterone + NADP(+) = 11-dehydrocorticosterone + NADPH + H(+). The enzyme catalyses a 7beta-hydroxysteroid + NADP(+) = a 7-oxosteroid + NADPH + H(+). It carries out the reaction 7-oxocholesterol + NADPH + H(+) = 7beta-hydroxycholesterol + NADP(+). It catalyses the reaction chenodeoxycholate + NADP(+) = 7-oxolithocholate + NADPH + H(+). The catalysed reaction is 7-oxolithocholate + NADPH + H(+) = ursodeoxycholate + NADP(+). The enzyme catalyses glycochenodeoxycholate + NADP(+) = 7-oxoglycolithocholate + NADPH + H(+). It carries out the reaction taurochenodeoxycholate + NADP(+) = 7-oxotaurolithocholate + NADPH + H(+). It catalyses the reaction tauroursodeoxycholate + NADP(+) = 7-oxotaurolithocholate + NADPH + H(+). The catalysed reaction is glycoursodeoxycholate + NADP(+) = 7-oxoglycolithocholate + NADPH + H(+). The enzyme catalyses 7-oxopregnenolone + NADPH + H(+) = 7beta-hydroxypregnenolone + NADP(+). It carries out the reaction 3beta,7alpha-dihydroxyandrost-5-en-17-one + NADP(+) = 3beta-hydroxy-5-androstene-7,17-dione + NADPH + H(+). It catalyses the reaction 3beta-hydroxy-5-androstene-7,17-dione + NADPH + H(+) = 3beta,7beta-dihydroxyandrost-5-en-17-one + NADP(+). The catalysed reaction is 3beta-hydroxy-5alpha-androstane-7,17-dione + NADPH + H(+) = 3beta,7beta-dihydroxy-5alpha-androstan-17-one + NADP(+). Functionally, controls the reversible conversion of biologically active glucocorticoids such as cortisone to cortisol, and 11-dehydrocorticosterone to corticosterone in the presence of NADP(H). Participates in the corticosteroid receptor-mediated anti-inflammatory response, as well as metabolic and homeostatic processes. Bidirectional in vitro, predominantly functions as a reductase in vivo, thereby increasing the concentration of active glucocorticoids. It has broad substrate specificity, besides glucocorticoids, it accepts other steroid and sterol substrates. Interconverts 7-oxo- and 7-hydroxy-neurosteroids such as 7-oxopregnenolone and 7beta-hydroxypregnenolone, 7-oxodehydroepiandrosterone (3beta-hydroxy-5-androstene-7,17-dione) and 7beta-hydroxydehydroepiandrosterone (3beta,7beta-dihydroxyandrost-5-en-17-one), among others. Catalyzes the stereo-specific conversion of the major dietary oxysterol, 7-ketocholesterol (7-oxocholesterol), into the more polar 7-beta-hydroxycholesterol metabolite. 7-oxocholesterol is one of the most important oxysterols, it participates in several events such as induction of apoptosis, accumulation in atherosclerotic lesions, lipid peroxidation, and induction of foam cell formation. Mediates the 7-oxo reduction of 7-oxolithocholate mainly to chenodeoxycholate, and to a lesser extent to ursodeoxycholate, both in its free form and when conjugated to glycine or taurine, providing a link between glucocorticoid activation and bile acid metabolism. Catalyzes the synthesis of 7-beta-25-dihydroxycholesterol from 7-oxo-25-hydroxycholesterol in vitro, which acts as a ligand for the G-protein-coupled receptor (GPCR) Epstein-Barr virus-induced gene 2 (EBI2) and may thereby regulate immune cell migration. This chain is 11-beta-hydroxysteroid dehydrogenase 1 (HSD11B1), found in Cavia porcellus (Guinea pig).